The primary structure comprises 1257 residues: Protein flightless-1 homolog (1257 aa).

LRR repeat units lie at residues 6-31 (LQFV…VEQM), 32-54 (TQMT…LSRC), 56-77 (NLEH…LSDL), 78-102 (PRLR…IFRM), 103-126 (KDLT…EYAK), 128-148 (SIVL…VCAN), 149-172 (LIDL…IRRL), 174-195 (MLQS…QLPS), 197-221 (TSLS…LDDM), 222-244 (HNLR…LFKL), 246-267 (NLRK…EGEW), 268-290 (ENLE…VVKL), 292-315 (RLTK…IGKL), 316-338 (IQLT…ISRC), 339-361 (VKLQ…IHLL), and 363-384 (DLKV…PNDA). 4 Gelsolin-like repeats span residues 523 to 600 (MDEA…EEFL), 640 to 714 (AVEM…PEFW), 759 to 832 (ELPK…MMFR), and 1168 to 1243 (EKTV…CRFR).

This sequence belongs to the villin/gelsolin family.

In terms of biological role, may play a key role in embryonic cellularization by interacting with both the cytoskeleton and other cellular components. The chain is Protein flightless-1 homolog (fli-1) from Caenorhabditis elegans.